The chain runs to 244 residues: MANVSMRDMLQAGVHFGHQTRYWNPKMKPFIFGARNKVHIINLEKTVPMFNSALDFLEQKAAKKGKVLFVGTKRAASDAVKEAAISCDQFYVDHRWLGGMLTNWKTVRQSIKRLKDLEVQSQDGTFDKVTKKEALMLARELEKLDKTLGGIKNMGGIPDVIFVIDADHEHIAIKEANNLGIPVISIVDTNSCPDNIDYVVPGNDDAIRAIKLYLEAAATTIKAGREQDVIVQAEQDGFVEEVSE.

It belongs to the universal ribosomal protein uS2 family.

This Psychromonas ingrahamii (strain DSM 17664 / CCUG 51855 / 37) protein is Small ribosomal subunit protein uS2.